We begin with the raw amino-acid sequence, 393 residues long: tRNA(Met) cytidine acetate ligase (393 aa).

ATP-binding residues include glycine 81, asparagine 142, and arginine 167.

The protein belongs to the TmcAL family.

It is found in the cytoplasm. It carries out the reaction cytidine(34) in elongator tRNA(Met) + acetate + ATP = N(4)-acetylcytidine(34) in elongator tRNA(Met) + AMP + diphosphate. Functionally, catalyzes the formation of N(4)-acetylcytidine (ac(4)C) at the wobble position of elongator tRNA(Met), using acetate and ATP as substrates. First activates an acetate ion to form acetyladenylate (Ac-AMP) and then transfers the acetyl group to tRNA to form ac(4)C34. The polypeptide is tRNA(Met) cytidine acetate ligase (Bacillus thuringiensis subsp. konkukian (strain 97-27)).